Reading from the N-terminus, the 382-residue chain is MSNATNNTLGSLLPQLEAAANSNSLYGGMVPNLRFNITMIVIWGILLTIHVVQLLMRQYWFSIAFICTGILEVLGFIGRTWSHSNVADMDAFLLNMICLTIAPVFTMGGIYYQLAKLIEVYGHRFSLLPSPMAYSFIFICSDIVSLVVQAVGGGLCGVAVTDGTSTTTGNHVFIAGLAIQVASMAIFLMLWFHFLFRIYISVRWEHINSRPISLSLLKISQTEVDYLYREKFHFLRLEPKRWVFHYFNLAMTVAVLTIFTRCCYRLAELVVGWDGYLITHEWYFIILDALMMAIATVTLTIFHPGFAFKGRSTSIPITPGHVDPETLPHTDDVEDILDTSDSKQFDIEKEEFQASMKYPISTFKQFMSKIANLFSSKKKAKL.

At 1 to 34 (MSNATNNTLGSLLPQLEAAANSNSLYGGMVPNLR) the chain is on the extracellular side. Asn3 and Asn6 each carry an N-linked (GlcNAc...) asparagine glycan. A helical membrane pass occupies residues 35–55 (FNITMIVIWGILLTIHVVQLL). Residues 56 to 57 (MR) are Cytoplasmic-facing. A helical transmembrane segment spans residues 58–78 (QYWFSIAFICTGILEVLGFIG). At 79–90 (RTWSHSNVADMD) the chain is on the extracellular side. A helical transmembrane segment spans residues 91–111 (AFLLNMICLTIAPVFTMGGIY). Residues 112–135 (YQLAKLIEVYGHRFSLLPSPMAYS) lie on the Cytoplasmic side of the membrane. A helical membrane pass occupies residues 136 to 156 (FIFICSDIVSLVVQAVGGGLC). Over 157–171 (GVAVTDGTSTTTGNH) the chain is Extracellular. Residues 172–192 (VFIAGLAIQVASMAIFLMLWF) form a helical membrane-spanning segment. The Cytoplasmic portion of the chain corresponds to 193–241 (HFLFRIYISVRWEHINSRPISLSLLKISQTEVDYLYREKFHFLRLEPKR). Residues 242–262 (WVFHYFNLAMTVAVLTIFTRC) form a helical membrane-spanning segment. At 263–281 (CYRLAELVVGWDGYLITHE) the chain is on the extracellular side. Residues 282–302 (WYFIILDALMMAIATVTLTIF) traverse the membrane as a helical segment. Residues 303–382 (HPGFAFKGRS…LFSSKKKAKL (80 aa)) are Cytoplasmic-facing.

Belongs to the lipid-translocating exporter (LTE) (TC 9.A.26.1) family.

Its subcellular location is the cell membrane. Its function is as follows. Catalyzes the ATP-dependent translocation of sphingoid long-chain bases (LCBs) from the cytoplasmic site toward the extracytoplasmic side of the membrane (flip-flop). Involved in the establishment of the functional lipid asymmetry of the plasma membrane. Regulates intracellular levels of LCBs, sphingolipid precursors that are growth inhibitory at increased levels. This Saccharomyces cerevisiae (strain RM11-1a) (Baker's yeast) protein is Sphingoid long-chain base transporter RSB1 (RSB1).